Consider the following 152-residue polypeptide: SsrA-binding protein (152 aa).

It belongs to the SmpB family.

It localises to the cytoplasm. Functionally, required for rescue of stalled ribosomes mediated by trans-translation. Binds to transfer-messenger RNA (tmRNA), required for stable association of tmRNA with ribosomes. tmRNA and SmpB together mimic tRNA shape, replacing the anticodon stem-loop with SmpB. tmRNA is encoded by the ssrA gene; the 2 termini fold to resemble tRNA(Ala) and it encodes a 'tag peptide', a short internal open reading frame. During trans-translation Ala-aminoacylated tmRNA acts like a tRNA, entering the A-site of stalled ribosomes, displacing the stalled mRNA. The ribosome then switches to translate the ORF on the tmRNA; the nascent peptide is terminated with the 'tag peptide' encoded by the tmRNA and targeted for degradation. The ribosome is freed to recommence translation, which seems to be the essential function of trans-translation. This is SsrA-binding protein from Helicobacter pylori (strain J99 / ATCC 700824) (Campylobacter pylori J99).